Consider the following 23-residue polypeptide: Acetylcholine receptor subunit gamma (23 aa).

This sequence belongs to the ligand-gated ion channel (TC 1.A.9) family. Acetylcholine receptor (TC 1.A.9.1) subfamily. Gamma/CHRNG sub-subfamily. In terms of assembly, pentamer of two alpha chains, and one each of the beta, delta, and gamma chains.

It is found in the postsynaptic cell membrane. Its subcellular location is the cell membrane. The catalysed reaction is K(+)(in) = K(+)(out). It carries out the reaction Na(+)(in) = Na(+)(out). Functionally, after binding acetylcholine, the AChR responds by an extensive change in conformation that affects all subunits and leads to opening of an ion-conducting channel across the plasma membrane. The chain is Acetylcholine receptor subunit gamma (chrng) from Electrophorus electricus (Electric eel).